The following is a 158-amino-acid chain: 2-C-methyl-D-erythritol 2,4-cyclodiphosphate synthase (158 aa).

2 residues coordinate a divalent metal cation: Asp-9 and His-11. 4-CDP-2-C-methyl-D-erythritol 2-phosphate-binding positions include 9-11 and 35-36; these read DVH and HS. A divalent metal cation is bound at residue His-43. Residues 57–59, 62–66, 133–136, Phe-140, and Arg-143 contribute to the 4-CDP-2-C-methyl-D-erythritol 2-phosphate site; these read DIG, FPDTD, and TTTE.

Belongs to the IspF family. In terms of assembly, homotrimer. Requires a divalent metal cation as cofactor.

The enzyme catalyses 4-CDP-2-C-methyl-D-erythritol 2-phosphate = 2-C-methyl-D-erythritol 2,4-cyclic diphosphate + CMP. It functions in the pathway isoprenoid biosynthesis; isopentenyl diphosphate biosynthesis via DXP pathway; isopentenyl diphosphate from 1-deoxy-D-xylulose 5-phosphate: step 4/6. Functionally, involved in the biosynthesis of isopentenyl diphosphate (IPP) and dimethylallyl diphosphate (DMAPP), two major building blocks of isoprenoid compounds. Catalyzes the conversion of 4-diphosphocytidyl-2-C-methyl-D-erythritol 2-phosphate (CDP-ME2P) to 2-C-methyl-D-erythritol 2,4-cyclodiphosphate (ME-CPP) with a corresponding release of cytidine 5-monophosphate (CMP). The sequence is that of 2-C-methyl-D-erythritol 2,4-cyclodiphosphate synthase from Haemophilus influenzae (strain PittEE).